The following is a 114-amino-acid chain: Fumarate reductase subunit D (114 aa).

Helical transmembrane passes span 25 to 45, 50 to 70, and 94 to 114; these read SGLAFPVLILILGILLPFGII, IIAFSHHWFGKLVILALTIFP, and LIFYGLAAVYSFIVLFAVIAI.

The protein belongs to the FrdD family. As to quaternary structure, part of an enzyme complex containing four subunits: a flavoprotein (FrdA), an iron-sulfur protein (FrdB), and two hydrophobic anchor proteins (FrdC and FrdD).

It localises to the cell inner membrane. Its function is as follows. Anchors the catalytic components of the fumarate reductase complex to the cell membrane, binds quinones. This is Fumarate reductase subunit D from Mannheimia succiniciproducens (strain KCTC 0769BP / MBEL55E).